Consider the following 240-residue polypeptide: Probable septum site-determining protein MinC (240 aa).

The protein belongs to the MinC family. Interacts with MinD and FtsZ.

In terms of biological role, cell division inhibitor that blocks the formation of polar Z ring septums. Rapidly oscillates between the poles of the cell to destabilize FtsZ filaments that have formed before they mature into polar Z rings. Prevents FtsZ polymerization. In Buchnera aphidicola subsp. Cinara cedri (strain Cc), this protein is Probable septum site-determining protein MinC.